Reading from the N-terminus, the 294-residue chain is Beta-lactamase (294 aa).

A signal peptide spans 1-27 (MFKKRGRQTVLIAAVLAFFTASSPLLA). Residue Ser76 is the Acyl-ester intermediate of the active site. Catalysis depends on Glu174, which acts as the Proton acceptor. 240–242 (KTG) is a substrate binding site.

It belongs to the class-A beta-lactamase family.

The enzyme catalyses a beta-lactam + H2O = a substituted beta-amino acid. This is Beta-lactamase from Citrobacter koseri (Citrobacter diversus).